We begin with the raw amino-acid sequence, 1236 residues long: DNA-directed RNA polymerase subunit beta (1236 aa).

The tract at residues Ile-1185–His-1236 is disordered. The segment covering Tyr-1201–Phe-1220 has biased composition (acidic residues).

The protein belongs to the RNA polymerase beta chain family. In terms of assembly, the RNAP catalytic core consists of 2 alpha, 1 beta, 1 beta' and 1 omega subunit. When a sigma factor is associated with the core the holoenzyme is formed, which can initiate transcription.

The catalysed reaction is RNA(n) + a ribonucleoside 5'-triphosphate = RNA(n+1) + diphosphate. Its function is as follows. DNA-dependent RNA polymerase catalyzes the transcription of DNA into RNA using the four ribonucleoside triphosphates as substrates. This is DNA-directed RNA polymerase subunit beta from Clostridium tetani (strain Massachusetts / E88).